The following is a 363-amino-acid chain: Dihydroorotate dehydrogenase (quinone) (363 aa).

Residues 62–66 and threonine 86 contribute to the FMN site; that span reads AGYDK. Substrate is bound at residue lysine 66. 111–115 lines the substrate pocket; sequence NRLGF. Asparagine 140 and asparagine 171 together coordinate FMN. Asparagine 171 contacts substrate. Residue serine 174 is the Nucleophile of the active site. Residue asparagine 176 coordinates substrate. FMN-binding residues include lysine 216 and serine 244. 245–246 provides a ligand contact to substrate; that stretch reads NT. FMN contacts are provided by residues glycine 267, glycine 296, and 317–318; that span reads YS.

This sequence belongs to the dihydroorotate dehydrogenase family. Type 2 subfamily. As to quaternary structure, monomer. FMN serves as cofactor.

The protein resides in the cell membrane. The catalysed reaction is (S)-dihydroorotate + a quinone = orotate + a quinol. It functions in the pathway pyrimidine metabolism; UMP biosynthesis via de novo pathway; orotate from (S)-dihydroorotate (quinone route): step 1/1. Catalyzes the conversion of dihydroorotate to orotate with quinone as electron acceptor. This chain is Dihydroorotate dehydrogenase (quinone), found in Allorhizobium ampelinum (strain ATCC BAA-846 / DSM 112012 / S4) (Agrobacterium vitis (strain S4)).